The following is a 466-amino-acid chain: 55 kDa erythrocyte membrane protein (466 aa).

The residue at position 2 (Thr2) is an N-acetylthreonine. 2 positions are modified to phosphoserine: Ser13 and Ser19. Thr49 carries the post-translational modification Phosphothreonine. Ser52, Ser57, and Ser110 each carry phosphoserine. The PDZ domain occupies 71-152; it reads LIQIEKVTEE…MISLKVIPNQ (82 aa). Positions 158 to 228 constitute an SH3 domain; it reads ALQMFMRAQF…PSPELQEWRV (71 aa). Ser243 bears the Phosphoserine mark. The tract at residues 268-466 is interaction with PALS1; that stretch reads VVSYEEVVRL…PQWVPVSWVY (199 aa). Residues 282-451 enclose the Guanylate kinase-like domain; sequence RKTLVLIGAS…TLKKLQEAFD (170 aa).

Belongs to the MAGUK family. As to quaternary structure, heterodimer with PALS1. Interacts with DLG5 and NF2. Interacts (via guanylate kinase-like domain) with WHRN (via third PDZ domain). Palmitoylated.

It localises to the cell membrane. The protein resides in the cell projection. Its subcellular location is the stereocilium. Essential regulator of neutrophil polarity. Regulates neutrophil polarization by regulating AKT1 phosphorylation through a mechanism that is independent of PIK3CG activity. The protein is 55 kDa erythrocyte membrane protein (MPP1) of Papio anubis (Olive baboon).